Here is a 461-residue protein sequence, read N- to C-terminus: Argininosuccinate lyase (461 aa).

The protein belongs to the lyase 1 family. Argininosuccinate lyase subfamily.

Its subcellular location is the cytoplasm. It catalyses the reaction 2-(N(omega)-L-arginino)succinate = fumarate + L-arginine. It functions in the pathway amino-acid biosynthesis; L-arginine biosynthesis; L-arginine from L-ornithine and carbamoyl phosphate: step 3/3. The chain is Argininosuccinate lyase from Limosilactobacillus reuteri subsp. reuteri (strain JCM 1112) (Lactobacillus reuteri).